The chain runs to 742 residues: 2'-5'-oligoadenylate synthase 2 (742 aa).

Residues M1–H35 form a disordered region. G2 carries the N-myristoyl glycine lipid modification. Over residues S10–W21 the composition is skewed to low complexity. OAS domain stretches follow at residues V60–V374 and T382–P721. K417 is subject to N6-acetyllysine. S436 lines the ATP pocket. Positions 448, 450, and 519 each coordinate Mg(2+). ATP-binding residues include R582 and K585.

It belongs to the 2-5A synthase family. As to quaternary structure, homodimer. The cofactor is Mg(2+). Myristoylation is not essential for its activity. Post-translationally, glycosylated. Glycosylation is essential for its activity. Expressed in the uterus. Expressed in mammary glands: expressed at low level before the establishment of lactation, then expression strongly increases, and subsequently decreases during early involution.

Its subcellular location is the cytoplasm. The protein localises to the perinuclear region. The enzyme catalyses 3 ATP = 5'-triphosphoadenylyl-(2'-&gt;5')-adenylyl-(2'-&gt;5')-adenosine + 2 diphosphate. Produced as a latent enzyme which is activated by double stranded RNA (dsRNA) generated during the course of viral infection. The dsRNA activator must be at least 15 nucleotides long, and no modification of the 2'-hydroxyl group is tolerated. ssRNA or dsDNA do not act as activators. Strongly inhibited by copper, iron and zinc ions. Partially inhibited by cobalt and nickel ions. In terms of biological role, interferon-induced, dsRNA-activated antiviral enzyme which plays a critical role in cellular innate antiviral response. Activated by detection of double stranded RNA (dsRNA): polymerizes higher oligomers of 2'-5'-oligoadenylates (2-5A) from ATP which then bind to the inactive monomeric form of ribonuclease L (RNASEL) leading to its dimerization and subsequent activation. Activation of RNASEL leads to degradation of cellular as well as viral RNA, resulting in the inhibition of protein synthesis, thus terminating viral replication. Can mediate the antiviral effect via the classical RNASEL-dependent pathway or an alternative antiviral pathway independent of RNASEL. In addition, it may also play a role in other cellular processes such as apoptosis, cell growth, differentiation and gene regulation. May act as a negative regulator of lactation, stopping lactation in virally infected mammary gland lobules, thereby preventing transmission of viruses to neonates. Non-infected lobules would not be affected, allowing efficient pup feeding during infection. The sequence is that of 2'-5'-oligoadenylate synthase 2 from Mus musculus (Mouse).